The primary structure comprises 254 residues: L-rhamnose 1-dehydrogenase (NADP(+)) (254 aa).

Gly13, Ser15, Arg16, Ile18, Asp64, and Asn91 together coordinate NADP(+). The active-site Proton donor is the Ser144. Positions 144, 146, 154, and 157 each coordinate beta-L-rhamnose. NADP(+) contacts are provided by Tyr157 and Lys161. Residue Tyr157 is the Proton acceptor of the active site. The active-site Lowers pKa of active site Tyr is the Lys161. Residue Thr189 participates in beta-L-rhamnose binding. An NADP(+)-binding site is contributed by Ile190. Position 195 (Asn195) interacts with beta-L-rhamnose.

It belongs to the short-chain dehydrogenases/reductases (SDR) family.

It catalyses the reaction L-rhamnofuranose + NADP(+) = L-rhamnono-1,4-lactone + NADPH + H(+). It participates in carbohydrate degradation; L-rhamnose degradation. In terms of biological role, involved in the non-phosphorylated metabolic pathway of L-rhamnose catabolism. Catalyzes the oxidation of L-rhamnose to yield L-rhamnono-1,4-lactone. It can also oxidize L-lyxose and L-mannose, and uses only NADP. In Thermoplasma acidophilum (strain ATCC 25905 / DSM 1728 / JCM 9062 / NBRC 15155 / AMRC-C165), this protein is L-rhamnose 1-dehydrogenase (NADP(+)).